Reading from the N-terminus, the 258-residue chain is Cytochrome P450 1A2 (258 aa).

It belongs to the cytochrome P450 family. It depends on heme as a cofactor.

Its subcellular location is the endoplasmic reticulum membrane. It localises to the microsome membrane. It carries out the reaction an organic molecule + reduced [NADPH--hemoprotein reductase] + O2 = an alcohol + oxidized [NADPH--hemoprotein reductase] + H2O + H(+). In terms of biological role, cytochromes P450 are a group of heme-thiolate monooxygenases. In liver microsomes, this enzyme is involved in an NADPH-dependent electron transport pathway. It oxidizes a variety of structurally unrelated compounds, including steroids, fatty acids, and xenobiotics. The sequence is that of Cytochrome P450 1A2 (CYP1A2) from Gallus gallus (Chicken).